The primary structure comprises 404 residues: 6-hydroxytryptophan 2,3-dioxygenase fscD (404 aa).

His-341 is a heme b binding site.

The protein belongs to the indoleamine 2,3-dioxygenase family. It depends on heme as a cofactor.

It functions in the pathway secondary metabolite biosynthesis. 6-hydroxytryptophan 2,3-dioxygenase; part of the fragmented gene cluster that mediates the biosynthesis of fusarochromene, a tryptophan-derived metabolite closely related to a group of mycotoxins including fusarochromanone. Within the pathway, fscD is responsible of the cleavage of the pyrrole ring of 6-hydroxytryptophan. The first step of the pathway is the epimerization of L-tryptophan to D-tryptophan in the presence of the NRPS-like tryptophan epimerase fscC. D-tryptophan is subsequently hydroxylated by the tryptophan 6-hydroxylase fscE to yield 6-hydroxytryptophan. The pyrrole ring undergoes cleavaged by the tryptophan 2,3-dioxygenase fscD and is finally converted to 4-hydroxykyrunenine by the hydrolase fscH. The NRPS-like oxidoreductase fscA reduces the carboxyl group to primary alcohol and the DMATS-type prenyltransferase fscG performs prenylation, followed by the formation of a chromene ring catalyzed by the oxidoreductase fscI, which leads to desacetylfusarochromene. Epoxidation by fscF and rearrangement reactions of chromene double bonds convert compound desacetylfusarochromene to fusarochromanones. Although specific acetyltransferases were not found near the fsc gene cluster, several predicted enzymes containing the N-acetyltransferase superfamily domain are present in the genome of F.equiseti. These predicted enzymes may have the potential to convert desacetylfusarochromene to fusarochromene. In Fusarium equiseti (Fusarium scirpi), this protein is 6-hydroxytryptophan 2,3-dioxygenase fscD.